The chain runs to 95 residues: Integration host factor subunit alpha (95 aa).

Positions 51–71 (NFDLRDKNERPGRNPKTGEDI) are disordered. Positions 53–69 (DLRDKNERPGRNPKTGE) are enriched in basic and acidic residues.

This sequence belongs to the bacterial histone-like protein family. In terms of assembly, heterodimer of an alpha and a beta chain.

Its function is as follows. This protein is one of the two subunits of integration host factor, a specific DNA-binding protein that functions in genetic recombination as well as in transcriptional and translational control. The protein is Integration host factor subunit alpha of Vibrio vulnificus (strain CMCP6).